The sequence spans 237 residues: Probable transcriptional regulatory protein MCAP_0598 (237 aa).

The protein belongs to the TACO1 family.

The protein localises to the cytoplasm. The polypeptide is Probable transcriptional regulatory protein MCAP_0598 (Mycoplasma capricolum subsp. capricolum (strain California kid / ATCC 27343 / NCTC 10154)).